The primary structure comprises 257 residues: Imidazole glycerol phosphate synthase subunit HisF (257 aa).

Catalysis depends on residues D12 and D131.

Belongs to the HisA/HisF family. In terms of assembly, heterodimer of HisH and HisF.

The protein resides in the cytoplasm. It catalyses the reaction 5-[(5-phospho-1-deoxy-D-ribulos-1-ylimino)methylamino]-1-(5-phospho-beta-D-ribosyl)imidazole-4-carboxamide + L-glutamine = D-erythro-1-(imidazol-4-yl)glycerol 3-phosphate + 5-amino-1-(5-phospho-beta-D-ribosyl)imidazole-4-carboxamide + L-glutamate + H(+). It participates in amino-acid biosynthesis; L-histidine biosynthesis; L-histidine from 5-phospho-alpha-D-ribose 1-diphosphate: step 5/9. IGPS catalyzes the conversion of PRFAR and glutamine to IGP, AICAR and glutamate. The HisF subunit catalyzes the cyclization activity that produces IGP and AICAR from PRFAR using the ammonia provided by the HisH subunit. The polypeptide is Imidazole glycerol phosphate synthase subunit HisF (Nocardia farcinica (strain IFM 10152)).